The chain runs to 302 residues: Probable 2-(5''-triphosphoribosyl)-3'-dephosphocoenzyme-A synthase 1 (302 aa).

The protein belongs to the CitG/MdcB family.

The catalysed reaction is 3'-dephospho-CoA + ATP = 2'-(5''-triphospho-alpha-D-ribosyl)-3'-dephospho-CoA + adenine. In Salmonella typhimurium (strain LT2 / SGSC1412 / ATCC 700720), this protein is Probable 2-(5''-triphosphoribosyl)-3'-dephosphocoenzyme-A synthase 1.